The sequence spans 282 residues: tRNA uridine(34) hydroxylase (282 aa).

The Rhodanese domain occupies 128 to 222 (DGRPVVMLDT…YFEEVGGSHY (95 aa)). The Cysteine persulfide intermediate role is filled by C182.

Belongs to the TrhO family.

It carries out the reaction uridine(34) in tRNA + AH2 + O2 = 5-hydroxyuridine(34) in tRNA + A + H2O. Catalyzes oxygen-dependent 5-hydroxyuridine (ho5U) modification at position 34 in tRNAs. This Cupriavidus metallidurans (strain ATCC 43123 / DSM 2839 / NBRC 102507 / CH34) (Ralstonia metallidurans) protein is tRNA uridine(34) hydroxylase.